The sequence spans 248 residues: Anamorsin homolog (248 aa).

The tract at residues 4 to 129 is N-terminal SAM-like domain; that stretch reads FKGLQKSLYI…ETGSSARLSF (126 aa). Positions 130-161 are linker; that stretch reads AKKNANAANVWKISGDDEELIDEEELLDEEDK. Positions 172, 181, 184, and 186 each coordinate [2Fe-2S] cluster. Residues 172–186 form a fe-S binding site A region; sequence CSTTGKRKACKNCSC. Residues Cys-209, Cys-212, Cys-220, and Cys-223 each contribute to the [4Fe-4S] cluster site. 2 consecutive short sequence motifs (cx2C motif) follow at residues 209-212 and 220-223; these read CGNC and CSTC. The fe-S binding site B stretch occupies residues 209–223; sequence CGNCYLGDAFRCSTC.

It belongs to the anamorsin family. Monomer. [2Fe-2S] cluster is required as a cofactor. It depends on [4Fe-4S] cluster as a cofactor.

It is found in the cytoplasm. Its subcellular location is the mitochondrion intermembrane space. In terms of biological role, component of the cytosolic iron-sulfur (Fe-S) protein assembly (CIA) machinery. Required for the maturation of extramitochondrial Fe-S proteins. Part of an electron transfer chain functioning in an early step of cytosolic Fe-S biogenesis, facilitating the de novo assembly of a [4Fe-4S] cluster on the cytosolic Fe-S scaffold complex. Electrons are transferred from NADPH via a FAD- and FMN-containing diflavin oxidoreductase. Together with the diflavin oxidoreductase, also required for the assembly of the diferric tyrosyl radical cofactor of ribonucleotide reductase (RNR), probably by providing electrons for reduction during radical cofactor maturation in the catalytic small subunit. This is Anamorsin homolog from Drosophila sechellia (Fruit fly).